The primary structure comprises 862 residues: MNRKYVPQEIEEKWQRYWEEKNTFKVTEDPSKKKYYLLEMFPYPSGKIHIGHVRNYTIGDVVARYKRMEGYNVLHPMGWDSFGMPAENAAIERGIHPSLWTNENITHMRKQLKRMGFSYDWDREVSTCEPVYYRWEQLFFLWMYEKGLAYKKTSSVNWCPRCQTVLANEQVEAGLCWRCGSEVVEKILDQWFFRITAYIDELLAGCDRLTGWPERVLTMQRNWIGKSYGCEVSFPMADGNGDIKVFTTRQDTLFGATFMLIAAEHPLVMELIKGKPVEKDARTFAEEVKKQDKLMRTSDYYEKQGLFLDCYCLNPLTGWEMPIFATNFVLADYGTGCVMAVPTHDQRDFEFAEKFGLRKVVVISPPDKTLDPETMTEAYVEEGILVNSGPFNGMENLKALDAIADHLIALGRGKRTIQYRLRDWGISRQRYWGAPIPMIMCPKCGTVPVPEAELPVVLPRDVDFSGEGGSPLAKHPEFLNTTCPSCGGPAKRESDTMDTFVESSWYFERYCCPHFAEKPGLNRQQVDYWMPVDQYIGGIEHAILHLLYARFYTRMLRDFGLVGVDEPFTNLLTQGMVCKETTRCPDHGYLYPEEVREGRCIHCLAEVIVGKTEKMSKSLKNVVDPDYLVRQYGADTARMFCLFAAPPEKDLEWSDQGVEGSFRFIGRTWRIVVDYLDDLQGIAPFAGDGELEGELKSLRRKTHQTIRKVRDDMGERFHFNTAISAIMELVNTLYGLPRPPREDRTALAVIRETIEAIILLLAPIVPHLTEELWQMLGHQGTCLADTPLPVYDPTVAAEDEMTIVIQVNGKVRSRVIVAADEAEDKIKALAMGDEKVSRFLEGKSVIKQVYVPKKLVNIVVKG.

The 'HIGH' region signature appears at 42-52 (PYPSGKIHIGH). The 'KMSKS' region motif lies at 614–618 (KMSKS). K617 serves as a coordination point for ATP.

Belongs to the class-I aminoacyl-tRNA synthetase family.

The protein localises to the cytoplasm. It catalyses the reaction tRNA(Leu) + L-leucine + ATP = L-leucyl-tRNA(Leu) + AMP + diphosphate. The sequence is that of Leucine--tRNA ligase from Syntrophus aciditrophicus (strain SB).